Reading from the N-terminus, the 1054-residue chain is SMC5-SMC6 complex localization factor protein 1 (1054 aa).

2 consecutive BRCT domains span residues 2–80 and 121–199; these read EDSA…AKSG and PGAF…LLEK. The interval 283–303 is disordered; the sequence is RHGLENQKETKKKDKNIQRSY. The span at 284–299 shows a compositional bias: basic and acidic residues; it reads HGLENQKETKKKDKNI. The NSE5-like domain; mediates interaction with SLF2 stretch occupies residues 407–1054; it reads PRGILNLIEN…MMCQSITELS (648 aa). 3 ANK repeats span residues 802-832, 836-865, and 870-900; these read KGET…DINV, AGWT…EVDL, and DGVT…ELLQ.

As to quaternary structure, interacts (via BRCT domains) with RAD18 (via C-terminus and phosphorylated form); this interaction is required for efficient repair of UV-induced DNA damage. Interacts (via N-terminus) with SLF2; this interaction links RAD18 to the SMC5-SMC6 complex. Interacts (via BRCT domains) with RAD18; this interaction occurs in a SLF2-independent manner. Interacts with SMC6. In terms of tissue distribution, widely expressed. Expressed in testis. Expressed in spermatocytes.

It localises to the nucleus. It is found in the cytoplasm. The protein localises to the cytoskeleton. Its subcellular location is the microtubule organizing center. The protein resides in the centrosome. Its function is as follows. Plays a role in the DNA damage response (DDR) pathway by regulating postreplication repair of UV-damaged DNA and genomic stability maintenance. The SLF1-SLF2 complex acts to link RAD18 with the SMC5-SMC6 complex at replication-coupled interstrand cross-links (ICL) and DNA double-strand breaks (DSBs) sites on chromatin during DNA repair in response to stalled replication forks. Promotes the recruitment of SLF2 and the SMC5-SMC6 complex to DNA lesions. The protein is SMC5-SMC6 complex localization factor protein 1 of Mus musculus (Mouse).